We begin with the raw amino-acid sequence, 124 residues long: Fluoride-specific ion channel FluC (124 aa).

Transmembrane regions (helical) follow at residues 4-24 (FVLV…LSGV), 35-55 (YGTV…WGIL), 67-87 (LLLL…TYEG), and 100-120 (ALYI…GAGL). 2 residues coordinate Na(+): glycine 75 and threonine 78.

This sequence belongs to the fluoride channel Fluc/FEX (TC 1.A.43) family.

The protein resides in the cell inner membrane. The enzyme catalyses fluoride(in) = fluoride(out). Its activity is regulated as follows. Na(+) is not transported, but it plays an essential structural role and its presence is essential for fluoride channel function. In terms of biological role, fluoride-specific ion channel. Important for reducing fluoride concentration in the cell, thus reducing its toxicity. This chain is Fluoride-specific ion channel FluC, found in Nitratidesulfovibrio vulgaris (strain ATCC 29579 / DSM 644 / CCUG 34227 / NCIMB 8303 / VKM B-1760 / Hildenborough) (Desulfovibrio vulgaris).